A 646-amino-acid polypeptide reads, in one-letter code: Elongation factor 4 (646 aa).

In terms of domain architecture, tr-type G spans 42–227 (AQIRNFCIIA…EVVRRVPHPQ (186 aa)). GTP contacts are provided by residues 54–59 (DHGKST) and 174–177 (NKID).

The protein belongs to the TRAFAC class translation factor GTPase superfamily. Classic translation factor GTPase family. LepA subfamily.

The protein localises to the cell membrane. The catalysed reaction is GTP + H2O = GDP + phosphate + H(+). Its function is as follows. Required for accurate and efficient protein synthesis under certain stress conditions. May act as a fidelity factor of the translation reaction, by catalyzing a one-codon backward translocation of tRNAs on improperly translocated ribosomes. Back-translocation proceeds from a post-translocation (POST) complex to a pre-translocation (PRE) complex, thus giving elongation factor G a second chance to translocate the tRNAs correctly. Binds to ribosomes in a GTP-dependent manner. In Mycobacterium leprae (strain Br4923), this protein is Elongation factor 4.